The following is a 344-amino-acid chain: Holliday junction branch migration complex subunit RuvB (344 aa).

The interval 1–183 (MPDRELISGD…FGLVLRLDPY (183 aa)) is large ATPase domain (RuvB-L). ATP is bound by residues Leu22, Arg23, Gly64, Lys67, Thr68, Thr69, 130-132 (EDF), Arg173, Tyr183, and Arg220. Thr68 provides a ligand contact to Mg(2+). Residues 184-254 (NTEELKAIVK…VAQTALNLLD (71 aa)) are small ATPAse domain (RuvB-S). The segment at 257–344 (RYGLDEIDQK…EGDHPSLFEA (88 aa)) is head domain (RuvB-H). The DNA site is built by Arg312 and Arg317.

This sequence belongs to the RuvB family. Homohexamer. Forms an RuvA(8)-RuvB(12)-Holliday junction (HJ) complex. HJ DNA is sandwiched between 2 RuvA tetramers; dsDNA enters through RuvA and exits via RuvB. An RuvB hexamer assembles on each DNA strand where it exits the tetramer. Each RuvB hexamer is contacted by two RuvA subunits (via domain III) on 2 adjacent RuvB subunits; this complex drives branch migration. In the full resolvosome a probable DNA-RuvA(4)-RuvB(12)-RuvC(2) complex forms which resolves the HJ.

It localises to the cytoplasm. It carries out the reaction ATP + H2O = ADP + phosphate + H(+). The RuvA-RuvB-RuvC complex processes Holliday junction (HJ) DNA during genetic recombination and DNA repair, while the RuvA-RuvB complex plays an important role in the rescue of blocked DNA replication forks via replication fork reversal (RFR). RuvA specifically binds to HJ cruciform DNA, conferring on it an open structure. The RuvB hexamer acts as an ATP-dependent pump, pulling dsDNA into and through the RuvAB complex. RuvB forms 2 homohexamers on either side of HJ DNA bound by 1 or 2 RuvA tetramers; 4 subunits per hexamer contact DNA at a time. Coordinated motions by a converter formed by DNA-disengaged RuvB subunits stimulates ATP hydrolysis and nucleotide exchange. Immobilization of the converter enables RuvB to convert the ATP-contained energy into a lever motion, pulling 2 nucleotides of DNA out of the RuvA tetramer per ATP hydrolyzed, thus driving DNA branch migration. The RuvB motors rotate together with the DNA substrate, which together with the progressing nucleotide cycle form the mechanistic basis for DNA recombination by continuous HJ branch migration. Branch migration allows RuvC to scan DNA until it finds its consensus sequence, where it cleaves and resolves cruciform DNA. The sequence is that of Holliday junction branch migration complex subunit RuvB from Solibacter usitatus (strain Ellin6076).